A 943-amino-acid chain; its full sequence is Isoleucine--tRNA ligase (943 aa).

Positions 59-69 (PYANGQIHLGH) match the 'HIGH' region motif. L-isoleucyl-5'-AMP is bound at residue E577. The 'KMSKS' region motif lies at 618–622 (KMSKS). K621 lines the ATP pocket. Zn(2+) is bound by residues C906, C909, C926, and C929.

The protein belongs to the class-I aminoacyl-tRNA synthetase family. IleS type 1 subfamily. Monomer. Zn(2+) is required as a cofactor.

The protein resides in the cytoplasm. The catalysed reaction is tRNA(Ile) + L-isoleucine + ATP = L-isoleucyl-tRNA(Ile) + AMP + diphosphate. Functionally, catalyzes the attachment of isoleucine to tRNA(Ile). As IleRS can inadvertently accommodate and process structurally similar amino acids such as valine, to avoid such errors it has two additional distinct tRNA(Ile)-dependent editing activities. One activity is designated as 'pretransfer' editing and involves the hydrolysis of activated Val-AMP. The other activity is designated 'posttransfer' editing and involves deacylation of mischarged Val-tRNA(Ile). This Xanthomonas campestris pv. campestris (strain 8004) protein is Isoleucine--tRNA ligase.